A 130-amino-acid chain; its full sequence is Large ribosomal subunit protein bL12 (130 aa).

It belongs to the bacterial ribosomal protein bL12 family. As to quaternary structure, homodimer. Part of the ribosomal stalk of the 50S ribosomal subunit. Forms a multimeric L10(L12)X complex, where L10 forms an elongated spine to which 2 to 4 L12 dimers bind in a sequential fashion. Binds GTP-bound translation factors.

Its function is as follows. Forms part of the ribosomal stalk which helps the ribosome interact with GTP-bound translation factors. Is thus essential for accurate translation. This is Large ribosomal subunit protein bL12 from Mycolicibacterium paratuberculosis (strain ATCC BAA-968 / K-10) (Mycobacterium paratuberculosis).